The sequence spans 195 residues: Imidazoleglycerol-phosphate dehydratase (195 aa).

This sequence belongs to the imidazoleglycerol-phosphate dehydratase family.

It is found in the cytoplasm. It carries out the reaction D-erythro-1-(imidazol-4-yl)glycerol 3-phosphate = 3-(imidazol-4-yl)-2-oxopropyl phosphate + H2O. It functions in the pathway amino-acid biosynthesis; L-histidine biosynthesis; L-histidine from 5-phospho-alpha-D-ribose 1-diphosphate: step 6/9. The sequence is that of Imidazoleglycerol-phosphate dehydratase from Methylorubrum extorquens (strain CM4 / NCIMB 13688) (Methylobacterium extorquens).